A 606-amino-acid chain; its full sequence is DNA ligase (606 aa).

Glutamate 263 is a binding site for ATP. Lysine 265 acts as the N6-AMP-lysine intermediate in catalysis. Arginine 270, arginine 285, glutamate 315, phenylalanine 355, arginine 432, and lysine 438 together coordinate ATP.

The protein belongs to the ATP-dependent DNA ligase family. The cofactor is Mg(2+). Mn(2+) serves as cofactor.

It carries out the reaction ATP + (deoxyribonucleotide)n-3'-hydroxyl + 5'-phospho-(deoxyribonucleotide)m = (deoxyribonucleotide)n+m + AMP + diphosphate.. It catalyses the reaction ADP + (deoxyribonucleotide)n-3'-hydroxyl + 5'-phospho-(deoxyribonucleotide)m = (deoxyribonucleotide)n+m + AMP + phosphate.. The enzyme catalyses GTP + (deoxyribonucleotide)n-3'-hydroxyl + 5'-phospho-(deoxyribonucleotide)m = (deoxyribonucleotide)n+m + GMP + diphosphate.. Functionally, DNA ligase that seals nicks in double-stranded DNA during DNA replication, DNA recombination and DNA repair. Can use ATP, ADP and GTP, but not CTP, TTP or NAD(+). This Sulfophobococcus zilligii protein is DNA ligase.